The chain runs to 496 residues: NADP-dependent glyceraldehyde-3-phosphate dehydrogenase (496 aa).

Substrate contacts are provided by residues R116 and 169-170 (NY). Positions 192, 195, and 230 each coordinate NADP(+). NAD(+) is bound at residue 245–249 (GGDTG). Catalysis depends on E264, which acts as the Proton acceptor. 297–299 (RCT) is a binding site for substrate. The active-site Nucleophile is the C298. Position 391 (E391) interacts with NADP(+). S404 is subject to Phosphoserine. R451 contributes to the substrate binding site.

The protein belongs to the aldehyde dehydrogenase family. As to quaternary structure, interacts with 14-3-3 protein when phosphorylated. This interaction is released by divalent cations. In terms of processing, phosphorylated in shoots and non-photosynthetic tissues, but not in leaves.

Its subcellular location is the cytoplasm. The catalysed reaction is D-glyceraldehyde 3-phosphate + NADP(+) + H2O = (2R)-3-phosphoglycerate + NADPH + 2 H(+). Its activity is regulated as follows. Insensitive to magnesium or calcium when dephosphorylated. When phosphorylated, 3-fold activation by magnesium or calcium, 2-fold activation by potassium, inhibited by ADP and AMP and insensitive to ATP or PPi. Its function is as follows. Important as a means of generating NADPH for biosynthetic reactions. The protein is NADP-dependent glyceraldehyde-3-phosphate dehydrogenase (GAPN) of Triticum aestivum (Wheat).